Reading from the N-terminus, the 618-residue chain is Dihydroxy-acid dehydratase (618 aa).

Residue aspartate 81 participates in Mg(2+) binding. Cysteine 122 is a binding site for [2Fe-2S] cluster. Mg(2+) is bound by residues aspartate 123 and lysine 124. Lysine 124 carries the post-translational modification N6-carboxylysine. Cysteine 197 contacts [2Fe-2S] cluster. Glutamate 493 is a binding site for Mg(2+). Serine 519 serves as the catalytic Proton acceptor.

It belongs to the IlvD/Edd family. In terms of assembly, homodimer. The cofactor is [2Fe-2S] cluster. Mg(2+) serves as cofactor.

The enzyme catalyses (2R)-2,3-dihydroxy-3-methylbutanoate = 3-methyl-2-oxobutanoate + H2O. It catalyses the reaction (2R,3R)-2,3-dihydroxy-3-methylpentanoate = (S)-3-methyl-2-oxopentanoate + H2O. It functions in the pathway amino-acid biosynthesis; L-isoleucine biosynthesis; L-isoleucine from 2-oxobutanoate: step 3/4. The protein operates within amino-acid biosynthesis; L-valine biosynthesis; L-valine from pyruvate: step 3/4. Functions in the biosynthesis of branched-chain amino acids. Catalyzes the dehydration of (2R,3R)-2,3-dihydroxy-3-methylpentanoate (2,3-dihydroxy-3-methylvalerate) into 2-oxo-3-methylpentanoate (2-oxo-3-methylvalerate) and of (2R)-2,3-dihydroxy-3-methylbutanoate (2,3-dihydroxyisovalerate) into 2-oxo-3-methylbutanoate (2-oxoisovalerate), the penultimate precursor to L-isoleucine and L-valine, respectively. This chain is Dihydroxy-acid dehydratase, found in Bordetella avium (strain 197N).